The following is a 258-amino-acid chain: MAKLAKQLIAKRFVSHLTEYDQYAIAQQQINHQLVDLLQANTDKTFQRALEIGCGTGNLTEKLLAKIPIEHLTLNDFNAIYYPTVLQKIKQKKPLVVVDFMQGDAEQLVFTRNFDLVSAASVVQWFDSPQQFLRNSAYALKPGGVVLFNSFSPLNLQEIRQLTGIGLNYPTRLQWQEWLAQDFEQCQLIEQPIKLTFDSPLAVLIHLKKTGVTAVSNKPWNRHQIKQFCMEYQAHFACEQGVYLTYTPILMLGIKKNG.

It belongs to the methyltransferase superfamily.

The enzyme catalyses malonyl-[ACP] + S-adenosyl-L-methionine = malonyl-[ACP] methyl ester + S-adenosyl-L-homocysteine. It participates in cofactor biosynthesis; biotin biosynthesis. Converts the free carboxyl group of a malonyl-thioester to its methyl ester by transfer of a methyl group from S-adenosyl-L-methionine (SAM). It allows to synthesize pimeloyl-ACP via the fatty acid synthetic pathway. This is Malonyl-[acyl-carrier protein] O-methyltransferase from Haemophilus ducreyi (strain 35000HP / ATCC 700724).